Here is a 194-residue protein sequence, read N- to C-terminus: FMN-dependent NADH:quinone oxidoreductase (194 aa).

FMN contacts are provided by residues S10 and 90–93; that span reads MYNL.

This sequence belongs to the azoreductase type 1 family. Homodimer. FMN serves as cofactor.

The catalysed reaction is 2 a quinone + NADH + H(+) = 2 a 1,4-benzosemiquinone + NAD(+). It catalyses the reaction N,N-dimethyl-1,4-phenylenediamine + anthranilate + 2 NAD(+) = 2-(4-dimethylaminophenyl)diazenylbenzoate + 2 NADH + 2 H(+). In terms of biological role, quinone reductase that provides resistance to thiol-specific stress caused by electrophilic quinones. Also exhibits azoreductase activity. Catalyzes the reductive cleavage of the azo bond in aromatic azo compounds to the corresponding amines. This Haemophilus influenzae (strain ATCC 51907 / DSM 11121 / KW20 / Rd) protein is FMN-dependent NADH:quinone oxidoreductase.